Consider the following 355-residue polypeptide: NADH-quinone oxidoreductase subunit H (355 aa).

The next 8 membrane-spanning stretches (helical) occupy residues 25-45 (VVRILVVSVVILLCVAYLILW), 91-111 (WLYLIAPIMTVVPAFAVWAVI), 126-146 (LLYAMAISSIGVYAVILAGWA), 170-190 (MGFALVLVLMTAGSLNLSEIV), 205-225 (FLSWNWLPLLPAFVVYFISGI), 253-273 (MAFALFFLAEYINMIVISALA), 290-310 (FIPGIFWLVLKVFALLSVFIW), and 330-350 (VFLPVTVIWVVVVGCWMMSPL).

Belongs to the complex I subunit 1 family. In terms of assembly, NDH-1 is composed of 14 different subunits. Subunits NuoA, H, J, K, L, M, N constitute the membrane sector of the complex.

Its subcellular location is the cell inner membrane. The catalysed reaction is a quinone + NADH + 5 H(+)(in) = a quinol + NAD(+) + 4 H(+)(out). Its function is as follows. NDH-1 shuttles electrons from NADH, via FMN and iron-sulfur (Fe-S) centers, to quinones in the respiratory chain. The immediate electron acceptor for the enzyme in this species is believed to be ubiquinone. Couples the redox reaction to proton translocation (for every two electrons transferred, four hydrogen ions are translocated across the cytoplasmic membrane), and thus conserves the redox energy in a proton gradient. This subunit may bind ubiquinone. The chain is NADH-quinone oxidoreductase subunit H from Burkholderia cenocepacia (strain ATCC BAA-245 / DSM 16553 / LMG 16656 / NCTC 13227 / J2315 / CF5610) (Burkholderia cepacia (strain J2315)).